Consider the following 78-residue polypeptide: D-alanyl carrier protein (78 aa).

The Carrier domain maps to 1–78 (MEFREQVLDL…KIVEALEELK (78 aa)). S36 bears the O-(pantetheine 4'-phosphoryl)serine mark.

It belongs to the DltC family. Post-translationally, 4'-phosphopantetheine is transferred from CoA to a specific serine of apo-DCP.

It localises to the cytoplasm. It functions in the pathway cell wall biogenesis; lipoteichoic acid biosynthesis. In terms of biological role, carrier protein involved in the D-alanylation of lipoteichoic acid (LTA). The loading of thioester-linked D-alanine onto DltC is catalyzed by D-alanine--D-alanyl carrier protein ligase DltA. The DltC-carried D-alanyl group is further transferred to cell membrane phosphatidylglycerol (PG) by forming an ester bond, probably catalyzed by DltD. D-alanylation of LTA plays an important role in modulating the properties of the cell wall in Gram-positive bacteria, influencing the net charge of the cell wall. This is D-alanyl carrier protein from Staphylococcus carnosus (strain TM300).